The primary structure comprises 369 residues: Cobalt-precorrin-5B C(1)-methyltransferase (369 aa).

Belongs to the CbiD family.

It catalyses the reaction Co-precorrin-5B + S-adenosyl-L-methionine = Co-precorrin-6A + S-adenosyl-L-homocysteine. It functions in the pathway cofactor biosynthesis; adenosylcobalamin biosynthesis; cob(II)yrinate a,c-diamide from sirohydrochlorin (anaerobic route): step 6/10. Its function is as follows. Catalyzes the methylation of C-1 in cobalt-precorrin-5B to form cobalt-precorrin-6A. This chain is Cobalt-precorrin-5B C(1)-methyltransferase, found in Geobacter metallireducens (strain ATCC 53774 / DSM 7210 / GS-15).